Consider the following 196-residue polypeptide: MYDYIKGKLSKITAKFIVVETAGLGYVIYVANPYSFSGYVNQEVTIYLHQVIRDDAHLLFGFHTENEKEIFLNLISVSGIGPTTALAIIAVDDNEGLVSAIDNSDIKYLTKFPKIGKKTAQQMILDLSGKFVEASGESATSRKVSSEQNSNLEEAMEALLALGYKATELKKVKAFFEGTNETVEQYIKSSLKMLMK.

The interval 1 to 63 is domain I; it reads MYDYIKGKLS…DDAHLLFGFH (63 aa). A domain II region spans residues 64-142; the sequence is TENEKEIFLN…EASGESATSR (79 aa). The flexible linker stretch occupies residues 143–148; the sequence is KVSSEQ. The tract at residues 148–196 is domain III; the sequence is QNSNLEEAMEALLALGYKATELKKVKAFFEGTNETVEQYIKSSLKMLMK.

Belongs to the RuvA family. Homotetramer. Forms an RuvA(8)-RuvB(12)-Holliday junction (HJ) complex. HJ DNA is sandwiched between 2 RuvA tetramers; dsDNA enters through RuvA and exits via RuvB. An RuvB hexamer assembles on each DNA strand where it exits the tetramer. Each RuvB hexamer is contacted by two RuvA subunits (via domain III) on 2 adjacent RuvB subunits; this complex drives branch migration. In the full resolvosome a probable DNA-RuvA(4)-RuvB(12)-RuvC(2) complex forms which resolves the HJ.

It localises to the cytoplasm. Its function is as follows. The RuvA-RuvB-RuvC complex processes Holliday junction (HJ) DNA during genetic recombination and DNA repair, while the RuvA-RuvB complex plays an important role in the rescue of blocked DNA replication forks via replication fork reversal (RFR). RuvA specifically binds to HJ cruciform DNA, conferring on it an open structure. The RuvB hexamer acts as an ATP-dependent pump, pulling dsDNA into and through the RuvAB complex. HJ branch migration allows RuvC to scan DNA until it finds its consensus sequence, where it cleaves and resolves the cruciform DNA. The sequence is that of Holliday junction branch migration complex subunit RuvA from Streptococcus agalactiae serotype Ia (strain ATCC 27591 / A909 / CDC SS700).